The following is a 303-amino-acid chain: UDP-3-O-acyl-N-acetylglucosamine deacetylase (303 aa).

The Zn(2+) site is built by H78, H237, and D241. The active-site Proton donor is the H264.

The protein belongs to the LpxC family. Zn(2+) serves as cofactor.

It catalyses the reaction a UDP-3-O-[(3R)-3-hydroxyacyl]-N-acetyl-alpha-D-glucosamine + H2O = a UDP-3-O-[(3R)-3-hydroxyacyl]-alpha-D-glucosamine + acetate. It functions in the pathway glycolipid biosynthesis; lipid IV(A) biosynthesis; lipid IV(A) from (3R)-3-hydroxytetradecanoyl-[acyl-carrier-protein] and UDP-N-acetyl-alpha-D-glucosamine: step 2/6. In terms of biological role, catalyzes the hydrolysis of UDP-3-O-myristoyl-N-acetylglucosamine to form UDP-3-O-myristoylglucosamine and acetate, the committed step in lipid A biosynthesis. The chain is UDP-3-O-acyl-N-acetylglucosamine deacetylase from Pseudomonas aeruginosa (strain LESB58).